Reading from the N-terminus, the 214-residue chain is Peroxiredoxin 2 (214 aa).

In terms of domain architecture, Thioredoxin spans 1 to 157; it reads MKLYQKFPET…LLRITKAMIV (157 aa). Cysteine 45 (cysteine sulfenic acid (-SOH) intermediate) is an active-site residue. Residue arginine 120 coordinates substrate.

Belongs to the peroxiredoxin family. Prx6 subfamily. Homodecamer. Pentamer of dimers that assemble into a ring structure.

Its subcellular location is the cytoplasm. It catalyses the reaction a hydroperoxide + [thioredoxin]-dithiol = an alcohol + [thioredoxin]-disulfide + H2O. Thiol-specific peroxidase that catalyzes the reduction of hydrogen peroxide and organic hydroperoxides to water and alcohols, respectively. Plays a role in cell protection against oxidative stress by detoxifying peroxides. The sequence is that of Peroxiredoxin 2 from Sulfuracidifex metallicus (Sulfolobus metallicus).